Consider the following 380-residue polypeptide: QRFP-like peptide receptor (380 aa).

Topologically, residues 1 to 51 are extracellular; that stretch reads MMLGNMTFTQTILHELLRQHNMTKNEFIERFGLPPLVYVPELSPGAKTVTL. N-linked (GlcNAc...) asparagine glycans are attached at residues Asn-5 and Asn-21. A helical membrane pass occupies residues 52–72; it reads VFYVIIFLAALLGNTLVVVVV. The Cytoplasmic segment spans residues 73 to 83; that stretch reads WKNKVMRTTMN. The chain crosses the membrane as a helical span at residues 84–104; that stretch reads IFICSLAASDLLITIVCIPVT. Over 105–122 the chain is Extracellular; it reads LMQNMLQNWIMGDFMCKL. An intrachain disulfide couples Cys-120 to Cys-203. Residues 123–143 form a helical membrane-spanning segment; sequence VPFIQTIAVASSILTLTGIAI. Over 144–164 the chain is Cytoplasmic; sequence ERYYAIIHPLKVKYLLSKTRA. A helical membrane pass occupies residues 165-185; sequence GIILALVWVVSVGVATPMLFV. The Extracellular segment spans residues 186-216; sequence HKAEEIHDFLYEQRFVTCQEKWWGQTQQTSY. The chain crosses the membrane as a helical span at residues 217–237; the sequence is TIFNLVVLFIIPLLTMTSLYI. Topologically, residues 238–269 are cytoplasmic; the sequence is RIAHRLWVQQPVGVTGNFAHGNSVRRKRQAVK. The helical transmembrane segment at 270–290 threads the bilayer; that stretch reads MLVVVVLLFAVCWLPYHTVTV. The Extracellular portion of the chain corresponds to 291 to 305; it reads MNELTGLRLEEKSAK. Residues 306 to 326 traverse the membrane as a helical segment; it reads LLIAIVQLIAFSNSFNNPVVY. Residues 327-380 are Cytoplasmic-facing; sequence AILNENFKKNFMTMLRCRVNRVSPQQVTPNTLQTPLEQSTRSCRLPAGAPNQQI.

The protein belongs to the G-protein coupled receptor 1 family.

The protein localises to the cell membrane. Functionally, receptor for QRFP-like peptide. The activity of this receptor is mediated by G proteins which activate a phosphatidyl-inositol-calcium second messenger system. The chain is QRFP-like peptide receptor from Branchiostoma floridae (Florida lancelet).